We begin with the raw amino-acid sequence, 121 residues long: Large ribosomal subunit protein bL12 (121 aa).

This sequence belongs to the bacterial ribosomal protein bL12 family. Homodimer. Part of the ribosomal stalk of the 50S ribosomal subunit. Forms a multimeric L10(L12)X complex, where L10 forms an elongated spine to which 2 to 4 L12 dimers bind in a sequential fashion. Binds GTP-bound translation factors.

Its function is as follows. Forms part of the ribosomal stalk which helps the ribosome interact with GTP-bound translation factors. Is thus essential for accurate translation. The sequence is that of Large ribosomal subunit protein bL12 from Tremblaya princeps.